The primary structure comprises 341 residues: NADH-quinone oxidoreductase subunit H 1 (341 aa).

Helical transmembrane passes span 7-27, 46-66, 80-100, 111-131, 157-177, 183-203, 244-264, 273-293, and 305-325; these read IILT…ISLL, PNVV…KYIF, FFLA…VIPF, VAIL…IMGG, LGLI…SHIV, AFGL…LFFI, YIAI…GWLS, VFWM…VKAI, and IGWK…AFLA.

It belongs to the complex I subunit 1 family. In terms of assembly, NDH-1 is composed of 14 different subunits. Subunits NuoA, H, J, K, L, M, N constitute the membrane sector of the complex.

The protein resides in the cell inner membrane. It carries out the reaction a quinone + NADH + 5 H(+)(in) = a quinol + NAD(+) + 4 H(+)(out). NDH-1 shuttles electrons from NADH, via FMN and iron-sulfur (Fe-S) centers, to quinones in the respiratory chain. The immediate electron acceptor for the enzyme in this species is believed to be ubiquinone. Couples the redox reaction to proton translocation (for every two electrons transferred, four hydrogen ions are translocated across the cytoplasmic membrane), and thus conserves the redox energy in a proton gradient. This subunit may bind ubiquinone. The polypeptide is NADH-quinone oxidoreductase subunit H 1 (Cereibacter sphaeroides (strain ATCC 17029 / ATH 2.4.9) (Rhodobacter sphaeroides)).